Consider the following 367-residue polypeptide: Phospho-N-acetylmuramoyl-pentapeptide-transferase (367 aa).

10 consecutive transmembrane segments (helical) span residues 27 to 47 (VLAA…VIRW), 73 to 93 (TMGG…WGDL), 97 to 117 (YVWT…YDDW), 132 to 152 (WKFF…AFSA), 167 to 187 (TMAY…VIVG), 200 to 220 (GLAI…AYVT), 237 to 257 (AGEL…FLWF), 264 to 284 (VFMG…VAVI), 289 to 309 (IVLL…MLQV), and 344 to 364 (QVVV…LSTL).

It belongs to the glycosyltransferase 4 family. MraY subfamily. Mg(2+) is required as a cofactor.

It localises to the cell inner membrane. The enzyme catalyses UDP-N-acetyl-alpha-D-muramoyl-L-alanyl-gamma-D-glutamyl-meso-2,6-diaminopimeloyl-D-alanyl-D-alanine + di-trans,octa-cis-undecaprenyl phosphate = di-trans,octa-cis-undecaprenyl diphospho-N-acetyl-alpha-D-muramoyl-L-alanyl-D-glutamyl-meso-2,6-diaminopimeloyl-D-alanyl-D-alanine + UMP. It participates in cell wall biogenesis; peptidoglycan biosynthesis. Functionally, catalyzes the initial step of the lipid cycle reactions in the biosynthesis of the cell wall peptidoglycan: transfers peptidoglycan precursor phospho-MurNAc-pentapeptide from UDP-MurNAc-pentapeptide onto the lipid carrier undecaprenyl phosphate, yielding undecaprenyl-pyrophosphoryl-MurNAc-pentapeptide, known as lipid I. This chain is Phospho-N-acetylmuramoyl-pentapeptide-transferase, found in Dechloromonas aromatica (strain RCB).